Reading from the N-terminus, the 272-residue chain is Tryptophan synthase alpha chain (272 aa).

Residues E49 and D60 each act as proton acceptor in the active site.

This sequence belongs to the TrpA family. Tetramer of two alpha and two beta chains.

The catalysed reaction is (1S,2R)-1-C-(indol-3-yl)glycerol 3-phosphate + L-serine = D-glyceraldehyde 3-phosphate + L-tryptophan + H2O. The protein operates within amino-acid biosynthesis; L-tryptophan biosynthesis; L-tryptophan from chorismate: step 5/5. In terms of biological role, the alpha subunit is responsible for the aldol cleavage of indoleglycerol phosphate to indole and glyceraldehyde 3-phosphate. The protein is Tryptophan synthase alpha chain of Psychrobacter cryohalolentis (strain ATCC BAA-1226 / DSM 17306 / VKM B-2378 / K5).